We begin with the raw amino-acid sequence, 37 residues long: MKVRASVKKICRNCKIVRRNGSVRVICVEPRHKQRQG.

Belongs to the bacterial ribosomal protein bL36 family.

This Marinomonas sp. (strain MWYL1) protein is Large ribosomal subunit protein bL36.